The following is a 706-amino-acid chain: D-(-)-3-hydroxybutyrate oligomer hydrolase (706 aa).

A signal peptide spans 1-32 (MTTTSKNCLTLTSIAAAVAAVLVLSACGGGSA). The active-site Charge relay system is S311.

The protein belongs to the D-(-)-3-hydroxybutyrate oligomer hydrolase family.

Its subcellular location is the secreted. The catalysed reaction is (3R)-hydroxybutanoate dimer + H2O = 2 (R)-3-hydroxybutanoate + H(+). It functions in the pathway lipid metabolism; butanoate metabolism. Its function is as follows. Participates in the degradation of poly-3-hydroxybutyrate (PHB). It works downstream of poly(3-hydroxybutyrate) depolymerase, hydrolyzing D(-)-3-hydroxybutyrate oligomers of various length (3HB-oligomers) into 3HB-monomers. The protein is D-(-)-3-hydroxybutyrate oligomer hydrolase of Polaromonas sp. (strain JS666 / ATCC BAA-500).